The following is a 363-amino-acid chain: Putative C-&gt;U-editing enzyme APOBEC-4 (363 aa).

The CMP/dCMP-type deaminase domain maps to 61 to 177 (PQTKHLTFYE…AWNREALRSL (117 aa)). Residue histidine 93 participates in Zn(2+) binding. The Proton donor role is filled by glutamate 95. Residues cysteine 127 and cysteine 134 each contribute to the Zn(2+) site.

Belongs to the cytidine and deoxycytidylate deaminase family. Zn(2+) serves as cofactor.

Functionally, putative C to U editing enzyme whose physiological substrate is not yet known. The polypeptide is Putative C-&gt;U-editing enzyme APOBEC-4 (APOBEC4) (Macaca fascicularis (Crab-eating macaque)).